A 183-amino-acid polypeptide reads, in one-letter code: Nucleoside triphosphate pyrophosphatase (183 aa).

Aspartate 71 functions as the Proton acceptor in the catalytic mechanism.

This sequence belongs to the Maf family. Requires a divalent metal cation as cofactor.

It is found in the cytoplasm. It carries out the reaction a ribonucleoside 5'-triphosphate + H2O = a ribonucleoside 5'-phosphate + diphosphate + H(+). The catalysed reaction is a 2'-deoxyribonucleoside 5'-triphosphate + H2O = a 2'-deoxyribonucleoside 5'-phosphate + diphosphate + H(+). Its function is as follows. Nucleoside triphosphate pyrophosphatase. May have a dual role in cell division arrest and in preventing the incorporation of modified nucleotides into cellular nucleic acids. This Campylobacter jejuni subsp. doylei (strain ATCC BAA-1458 / RM4099 / 269.97) protein is Nucleoside triphosphate pyrophosphatase.